We begin with the raw amino-acid sequence, 266 residues long: Beta-lactamase OXA-20 (266 aa).

Positions 1–21 (MIIRFLALLFSAVVLVSLGHA) are cleaved as a signal peptide. Ser-72 serves as the catalytic Acyl-ester intermediate. N6-carboxylysine is present on Lys-75. 210–212 (KTG) is a binding site for substrate.

This sequence belongs to the class-D beta-lactamase family.

The catalysed reaction is a beta-lactam + H2O = a substituted beta-amino acid. Inhibited by clavulanic acid. In terms of biological role, this is an oxacillin-hydrolyzing beta-lactamase. The protein is Beta-lactamase OXA-20 (bla) of Pseudomonas aeruginosa.